We begin with the raw amino-acid sequence, 504 residues long: Probable GTP-binding protein OBGC2 (504 aa).

A compositionally biased stretch (basic and acidic residues) spans 24-39 (AHRDARPALRLPELHA). Disordered stretches follow at residues 24 to 46 (AHRD…RRNN) and 93 to 122 (VLAM…GVKK). Positions 73–276 (HKYFDHAVVT…VSLELILRVV (204 aa)) constitute an Obg domain. A compositionally biased stretch (basic residues) spans 107 to 122 (SPRRRSDKGKRSGVKK). An OBG-type G domain is found at 277 to 494 (ADVGLVGLPN…MLKEIRAALR (218 aa)). GTP contacts are provided by residues 283 to 290 (GLPNAGKS) and 337 to 341 (DLPGL). Polar residues predominate over residues 436-452 (SEDSLNGNTGEHNTSSE). The tract at residues 436–463 (SEDSLNGNTGEHNTSSETKVEGGEKELR) is disordered. The segment covering 453–463 (TKVEGGEKELR) has biased composition (basic and acidic residues).

The protein belongs to the TRAFAC class OBG-HflX-like GTPase superfamily. OBG GTPase family.

Functionally, may bind GTP and have GTPase activity. The sequence is that of Probable GTP-binding protein OBGC2 from Oryza sativa subsp. japonica (Rice).